Consider the following 146-residue polypeptide: Hemoglobin subunit beta-1 (146 aa).

Positions 2–146 constitute a Globin domain; it reads HWTAEEKHLL…VAHALARRYH (145 aa). Heme b contacts are provided by His-63 and His-92.

It belongs to the globin family. As to quaternary structure, there are three forms of hemoglobin in Sphenodon: A, A' and D. Hb A is a tetramer of two alpha-A and two beta-1, Hb A' is a tetramer of two alpha-a and two beta-2, Hb D is a tetramer of two alpha-D and two beta-2.

Involved in oxygen transport from the lung to the various peripheral tissues. The protein is Hemoglobin subunit beta-1 (HBB1) of Sphenodon punctatus (Tuatara).